Here is a 599-residue protein sequence, read N- to C-terminus: MVGESTIRNFAIIAHIDHGKSTLADRLIEACNALSDRDMKDQVLDSMDIERERGITIKAQTVRLTYAAKDGVVYHLNLVDTPGHVDFSYEVSRSLAACEGSLLVIDSSQGVEAQTLANVYKAIENDHEIVTVLNKADLASSDPERVKSQVEEIIGLDASGALLISAKTGMGISDVLEAIVHRLPAPVGDANAPLKAILVDSWYDPYLGIVILLRVKDGVLKKGMKVAMLSTGAVYQVDNVGVFTPNKQMVDSLSVGEIGFITAGIKEIADCKVGDTLTEDSRRCDNPFPGFRATCPVVFCSLFPVDASSFEHLREALGKLQLNDSSFTFDMESSTALGYGFRCGFLGMLHLEVVQERLEREFDLDLTATAPSVVYRVTDKHRVTKEVHNPNDLPESHEILGVEEPWIAATIMVPDQYLGSILALCNSKRGEKVDLSYTGSMALLKYRLPLAEVVFDFYDSLKSVSKGYASLDWYVDGYVPTEISKLTILINSEPVDALSCIIHKSKVESRGREICERLKDLIPRQQYKVAIQAAVGAKIVARETISPYRKDVTAKVYGRDVTRKMKLLEKQKKGKKRLRSIGNVNVPQSAFIQALKMKD.

The 183-residue stretch at 5 to 187 (STIRNFAIIA…AIVHRLPAPV (183 aa)) folds into the tr-type G domain. GTP-binding positions include 17-22 (DHGKST) and 134-137 (NKAD).

It belongs to the TRAFAC class translation factor GTPase superfamily. Classic translation factor GTPase family. LepA subfamily.

Its subcellular location is the cell inner membrane. It carries out the reaction GTP + H2O = GDP + phosphate + H(+). Its function is as follows. Required for accurate and efficient protein synthesis under certain stress conditions. May act as a fidelity factor of the translation reaction, by catalyzing a one-codon backward translocation of tRNAs on improperly translocated ribosomes. Back-translocation proceeds from a post-translocation (POST) complex to a pre-translocation (PRE) complex, thus giving elongation factor G a second chance to translocate the tRNAs correctly. Binds to ribosomes in a GTP-dependent manner. This Anaplasma marginale (strain Florida) protein is Elongation factor 4.